The following is a 384-amino-acid chain: Alpha-2B adrenergic receptor (384 aa).

A helical transmembrane segment spans residues 1–25 (AIAAVITFLILFTIFGNALVILAVL). The Cytoplasmic segment spans residues 26–36 (TSRSLRAPQNL). Residues 37–62 (FLVSLAAADILVATLIIPFSLANELL) form a helical membrane-spanning segment. At 63–72 (GYWYFRRTWC) the chain is on the extracellular side. Cys-72 and Cys-151 are oxidised to a cystine. The chain crosses the membrane as a helical span at residues 73-95 (EVYLALDVLFCTSSIVHLCAISL). Residues 96–117 (DRYWAVSRALQYNSKRTPRRIK) are Cytoplasmic-facing. Residues 118 to 140 (CVILTVWLIAAAISLPPLIYKGD) form a helical membrane-spanning segment. Residues 141–156 (QGPQPRGRPQCKLNQE) lie on the Extracellular side of the membrane. The chain crosses the membrane as a helical span at residues 157-180 (AWYILSSSIGSFFAPCLIMILVYL). The Cytoplasmic portion of the chain corresponds to 181–348 (RIYLIAKRSN…LTREKRFTFV (168 aa)). The tract at residues 192–289 (RGPRAKGAPR…PEEEEECGSP (98 aa)) is disordered. A compositionally biased stretch (polar residues) spans 218–229 (LANSPTLASSLA). The segment covering 240–249 (PPGEKERETP) has biased composition (basic and acidic residues). A helical membrane pass occupies residues 349–372 (LAVVIGVFVLCWFPFFFSYSLGAI). Topologically, residues 373 to 381 (CPQHCKVPH) are extracellular. Residues 382-384 (GLF) traverse the membrane as a helical segment.

It belongs to the G-protein coupled receptor 1 family. Adrenergic receptor subfamily. ADRA2B sub-subfamily. In terms of assembly, interacts with RAB26. Interacts with PPP1R9B. Interacts with GGA1, GGA2 and GGA3.

Its subcellular location is the cell membrane. Alpha-2 adrenergic receptors mediate the catecholamine-induced inhibition of adenylate cyclase through the action of G proteins. The chain is Alpha-2B adrenergic receptor (ADRA2B) from Elephas maximus (Indian elephant).